We begin with the raw amino-acid sequence, 119 residues long: uncharacterized protein (119 aa).

This is an uncharacterized protein from Aquifex aeolicus (strain VF5).